The chain runs to 353 residues: Mitogen-activated protein kinase mpkB (353 aa).

Residues tyrosine 21–leucine 309 enclose the Protein kinase domain. ATP is bound by residues isoleucine 27–valine 35 and lysine 50. The Proton acceptor role is filled by aspartate 145.

This sequence belongs to the protein kinase superfamily. Ser/Thr protein kinase family. MAP kinase subfamily. Requires Mg(2+) as cofactor.

Its subcellular location is the nucleus. It carries out the reaction L-seryl-[protein] + ATP = O-phospho-L-seryl-[protein] + ADP + H(+). It catalyses the reaction L-threonyl-[protein] + ATP = O-phospho-L-threonyl-[protein] + ADP + H(+). Its activity is regulated as follows. Activated by threonine and tyrosine phosphorylation. Mitogen-activated protein kinase (MAPK) that plays a role in conidiation and regulation of secondary metabolite biosynthesis. Acts as a repressor of dihydroxynaphthalene (DHN)-melanin production. The polypeptide is Mitogen-activated protein kinase mpkB (Aspergillus fumigatus (strain CBS 144.89 / FGSC A1163 / CEA10) (Neosartorya fumigata)).